The following is a 586-amino-acid chain: Anaerobic glycerol-3-phosphate dehydrogenase subunit A1 (586 aa).

An FAD-binding site is contributed by 6 to 34 (SVLVIGGGSTGTGIARDLAMRGLDVTLVE). The tract at residues 559-586 (GGAVADGGRERAADRADDDALGGADGDN) is disordered. Over residues 574–586 (ADDDALGGADGDN) the composition is skewed to acidic residues.

It belongs to the FAD-dependent glycerol-3-phosphate dehydrogenase family. As to quaternary structure, composed of a catalytic GlpA/B dimer and of membrane bound GlpC. It depends on FAD as a cofactor. FMN serves as cofactor.

The protein localises to the cell membrane. The catalysed reaction is a quinone + sn-glycerol 3-phosphate = dihydroxyacetone phosphate + a quinol. The protein operates within polyol metabolism; glycerol degradation via glycerol kinase pathway; glycerone phosphate from sn-glycerol 3-phosphate (anaerobic route): step 1/1. Up-regulated by glycerol and no inhibition by glucose. Conversion of glycerol 3-phosphate to dihydroxyacetone phosphate. Required for growth on glycerol and for glycerol metabolism. The polypeptide is Anaerobic glycerol-3-phosphate dehydrogenase subunit A1 (gpdA1) (Haloferax volcanii (strain ATCC 29605 / DSM 3757 / JCM 8879 / NBRC 14742 / NCIMB 2012 / VKM B-1768 / DS2) (Halobacterium volcanii)).